The sequence spans 137 residues: Large ribosomal subunit protein uL16c (137 aa).

It belongs to the universal ribosomal protein uL16 family. Part of the 50S ribosomal subunit.

It is found in the plastid. The protein resides in the chloroplast. In Adiantum capillus-veneris (Maidenhair fern), this protein is Large ribosomal subunit protein uL16c.